Here is a 188-residue protein sequence, read N- to C-terminus: GMP synthase [glutamine-hydrolyzing] subunit A (188 aa).

Residues 1-188 form the Glutamine amidotransferase type-1 domain; sequence MIVIMDNGGQ…RNFAELCGEL (188 aa). Residue Cys78 is the Nucleophile of the active site. Catalysis depends on residues His165 and Glu167.

Heterodimer composed of a glutamine amidotransferase subunit (A) and a GMP-binding subunit (B).

It carries out the reaction XMP + L-glutamine + ATP + H2O = GMP + L-glutamate + AMP + diphosphate + 2 H(+). Its pathway is purine metabolism; GMP biosynthesis; GMP from XMP (L-Gln route): step 1/1. Its function is as follows. Catalyzes the synthesis of GMP from XMP. The protein is GMP synthase [glutamine-hydrolyzing] subunit A of Thermococcus kodakarensis (strain ATCC BAA-918 / JCM 12380 / KOD1) (Pyrococcus kodakaraensis (strain KOD1)).